Reading from the N-terminus, the 944-residue chain is Valine--tRNA ligase (944 aa).

The 'HIGH' region motif lies at 43–53 (PNVTGTLHMGH). A 'KMSKS' region motif is present at residues 550–554 (KMSKS). Lys-553 serves as a coordination point for ATP. Residues 878 to 944 (LVDMDAERTR…TGLREQRAKL (67 aa)) are a coiled coil.

Belongs to the class-I aminoacyl-tRNA synthetase family. ValS type 1 subfamily. In terms of assembly, monomer.

It is found in the cytoplasm. It catalyses the reaction tRNA(Val) + L-valine + ATP = L-valyl-tRNA(Val) + AMP + diphosphate. Its function is as follows. Catalyzes the attachment of valine to tRNA(Val). As ValRS can inadvertently accommodate and process structurally similar amino acids such as threonine, to avoid such errors, it has a 'posttransfer' editing activity that hydrolyzes mischarged Thr-tRNA(Val) in a tRNA-dependent manner. The chain is Valine--tRNA ligase from Xanthomonas campestris pv. campestris (strain 8004).